Reading from the N-terminus, the 45-residue chain is Cytochrome b559 subunit beta (45 aa).

A helical transmembrane segment spans residues 20 to 36 (WLALHTLGVPTVFFLGA). Residue H24 coordinates heme.

Belongs to the PsbE/PsbF family. As to quaternary structure, heterodimer of an alpha subunit and a beta subunit. PSII is composed of 1 copy each of membrane proteins PsbA, PsbB, PsbC, PsbD, PsbE, PsbF, PsbH, PsbI, PsbJ, PsbK, PsbL, PsbM, PsbT, PsbX, PsbY, PsbZ, Psb30/Ycf12, peripheral proteins PsbO, CyanoQ (PsbQ), PsbU, PsbV and a large number of cofactors. It forms dimeric complexes. It depends on heme b as a cofactor.

It is found in the cellular thylakoid membrane. In terms of biological role, this b-type cytochrome is tightly associated with the reaction center of photosystem II (PSII). PSII is a light-driven water:plastoquinone oxidoreductase that uses light energy to abstract electrons from H(2)O, generating O(2) and a proton gradient subsequently used for ATP formation. It consists of a core antenna complex that captures photons, and an electron transfer chain that converts photonic excitation into a charge separation. The polypeptide is Cytochrome b559 subunit beta (Parasynechococcus marenigrum (strain WH8102)).